Here is a 942-residue protein sequence, read N- to C-terminus: Sucrose synthase 6 (942 aa).

A GT-B glycosyltransferase region spans residues 281 to 759 (TVFNVVIFSV…GLKRIYECYT (479 aa)). Residues 830–862 (TTNLGAGSKQKEVTETEKTKQKSKDGQEQHDVK) form a disordered region. Residues 838-862 (KQKEVTETEKTKQKSKDGQEQHDVK) are compositionally biased toward basic and acidic residues.

It belongs to the glycosyltransferase 1 family. Plant sucrose synthase subfamily. As to expression, detected in the whole plant but more precisely confined to the vasculature in cotyledons, leaves, petals, anthers and roots.

It localises to the secreted. The protein localises to the cell wall. It carries out the reaction an NDP-alpha-D-glucose + D-fructose = a ribonucleoside 5'-diphosphate + sucrose + H(+). Its function is as follows. Sucrose-cleaving enzyme that provides UDP-glucose and fructose for various metabolic pathways. Functions in callose synthesis at the site of phloem sieve elements. This is Sucrose synthase 6 (SUS6) from Arabidopsis thaliana (Mouse-ear cress).